Reading from the N-terminus, the 980-residue chain is Envelope glycoprotein B (980 aa).

The span at 1-14 (MSSGCRSVGGSTWG) shows a compositional bias: polar residues. Disordered regions lie at residues 1 to 20 (MSSGCRSVGGSTWGNWRGDG) and 88 to 118 (TTPSPPTSTPTSMSTHSHGTVDPTLLPTETP). A signal peptide spans 1 to 86 (MSSGCRSVGG…LFGSCVVRAV (86 aa)). Topologically, residues 87–849 (PTTPSPPTST…SGIASFLNNP (763 aa)) are virion surface. Low complexity predominate over residues 96-118 (TPTSMSTHSHGTVDPTLLPTETP). 5 cysteine pairs are disulfide-bonded: C140–C647, C157–C603, C231–C296, C389–C437, and C668–C708. A glycan (N-linked (GlcNAc...) asparagine; by host) is linked at N165. Residues 197–203 (VWKGYSH) are involved in fusion and/or binding to host membrane. N275 is a glycosylation site (N-linked (GlcNAc...) asparagine; by host). Positions 282–290 (GWMPWRHYT) are involved in fusion and/or binding to host membrane. 6 N-linked (GlcNAc...) asparagine; by host glycosylation sites follow: N380, N423, N497, N514, N515, and N560. A compositionally biased stretch (low complexity) spans 505–516 (LLNPNANNNNNT). The tract at residues 505-535 (LLNPNANNNNNTTRRRRSLLSVPEPQPTQDG) is disordered. N-linked (GlcNAc...) asparagine; by host glycosylation is found at N727 and N749. Hydrophobic membrane proximal region stretches follow at residues 794-847 (IDSV…SFLN) and 823-843 (AVGTLVLGAAGAVVSTVSGIA). A helical membrane pass occupies residues 850–870 (FGGLAIGLLVIAGLVAAFFAY). Over 871–980 (RYVMQIRSNP…NDTMENEKMV (110 aa)) the chain is Intravirion. The short motif at 925 to 928 (YMSM) is the Golgi targeting element. The Internalization motif signature appears at 965–968 (YTRL).

The protein belongs to the herpesviridae glycoprotein B family. Homotrimer; disulfide-linked. Binds to heparan sulfate proteoglycans. Interacts with gH/gL heterodimer. In terms of processing, a proteolytic cleavage by host furin generates two subunits that remain linked by disulfide bonds.

It localises to the virion membrane. Its subcellular location is the host cell membrane. It is found in the host endosome membrane. The protein localises to the host Golgi apparatus membrane. In terms of biological role, envelope glycoprotein that forms spikes at the surface of virion envelope. Essential for the initial attachment to heparan sulfate moieties of the host cell surface proteoglycans. Involved in fusion of viral and cellular membranes leading to virus entry into the host cell. Following initial binding to its host receptors, membrane fusion is mediated by the fusion machinery composed at least of gB and the heterodimer gH/gL. May be involved in the fusion between the virion envelope and the outer nuclear membrane during virion egress. This Equus caballus (Horse) protein is Envelope glycoprotein B.